Reading from the N-terminus, the 494-residue chain is Flagellin A (494 aa).

This sequence belongs to the bacterial flagellin family. In terms of assembly, heteromer of FlaA and FlaB. FlaB is located proximal to the hook while the remainder of the filament is composed of the predominant FlaA.

The protein resides in the secreted. It localises to the bacterial flagellum. Functionally, flagellin is the subunit protein which polymerizes to form the filaments of bacterial flagella. Important for motility and virulence. This Helicobacter mustelae protein is Flagellin A (flaA).